A 124-amino-acid polypeptide reads, in one-letter code: KESAAAKFZRZHMBSSTSSASSSBYCBZMMKSRNLTQDRCKPVBTFVHZSLABVZAVCSZKBVACKBGZTBCYZSYSTMSITBCRZTGSSKYPBCAYKTTQAKKHIIVACZGBPYVPVHFBASV.

Substrate is bound by residues Lys-7 and Arg-10. Catalysis depends on His-12, which acts as the Proton acceptor. 4 disulfides stabilise this stretch: Cys-26–Cys-84, Cys-40–Cys-95, Cys-58–Cys-110, and Cys-65–Cys-72. An N-linked (GlcNAc...) asparagine; partial glycan is attached at Asn-34. Residues 41–45 (KPVBT), Lys-66, and Arg-85 each bind substrate. Residue His-119 is the Proton donor of the active site.

The protein belongs to the pancreatic ribonuclease family. In terms of assembly, monomer. Interacts with and forms tight 1:1 complexes with RNH1. Dimerization of two such complexes may occur. Interaction with RNH1 inhibits this protein. In terms of tissue distribution, pancreas.

It is found in the secreted. It catalyses the reaction an [RNA] containing cytidine + H2O = an [RNA]-3'-cytidine-3'-phosphate + a 5'-hydroxy-ribonucleotide-3'-[RNA].. It carries out the reaction an [RNA] containing uridine + H2O = an [RNA]-3'-uridine-3'-phosphate + a 5'-hydroxy-ribonucleotide-3'-[RNA].. Its function is as follows. Endonuclease that catalyzes the cleavage of RNA on the 3' side of pyrimidine nucleotides. Acts on single-stranded and double-stranded RNA. This chain is Ribonuclease pancreatic (RNASE1), found in Damaliscus korrigum (Topi).